The chain runs to 201 residues: Ribosomal RNA small subunit methyltransferase G (201 aa).

Residues Gly71, Phe76, 120–121, and Arg134 each bind S-adenosyl-L-methionine; that span reads LE.

It belongs to the methyltransferase superfamily. RNA methyltransferase RsmG family.

The protein localises to the cytoplasm. The enzyme catalyses guanosine(527) in 16S rRNA + S-adenosyl-L-methionine = N(7)-methylguanosine(527) in 16S rRNA + S-adenosyl-L-homocysteine. Its function is as follows. Specifically methylates the N7 position of guanine in position 527 of 16S rRNA. This is Ribosomal RNA small subunit methyltransferase G from Rhodospirillum rubrum (strain ATCC 11170 / ATH 1.1.1 / DSM 467 / LMG 4362 / NCIMB 8255 / S1).